The chain runs to 416 residues: Serine hydroxymethyltransferase (416 aa).

(6S)-5,6,7,8-tetrahydrofolate-binding positions include Leu121 and 125-127 (GHL). An N6-(pyridoxal phosphate)lysine modification is found at Lys229.

Belongs to the SHMT family. As to quaternary structure, homodimer. Requires pyridoxal 5'-phosphate as cofactor.

The protein localises to the cytoplasm. The enzyme catalyses (6R)-5,10-methylene-5,6,7,8-tetrahydrofolate + glycine + H2O = (6S)-5,6,7,8-tetrahydrofolate + L-serine. It functions in the pathway one-carbon metabolism; tetrahydrofolate interconversion. The protein operates within amino-acid biosynthesis; glycine biosynthesis; glycine from L-serine: step 1/1. Catalyzes the reversible interconversion of serine and glycine with tetrahydrofolate (THF) serving as the one-carbon carrier. This reaction serves as the major source of one-carbon groups required for the biosynthesis of purines, thymidylate, methionine, and other important biomolecules. Also exhibits THF-independent aldolase activity toward beta-hydroxyamino acids, producing glycine and aldehydes, via a retro-aldol mechanism. This Azoarcus sp. (strain BH72) protein is Serine hydroxymethyltransferase.